Reading from the N-terminus, the 370-residue chain is Adaptive-response sensory kinase SasA (370 aa).

The 214-residue stretch at 152-365 (MVAHELRTPL…CFYLTVPVWQ (214 aa)) folds into the Histidine kinase domain. H155 carries the post-translational modification Phosphohistidine; by autocatalysis.

Homooligomerizes. Interacts with KaiC. Participates in the KaiBC complex, whose core is composed of a KaiC homohexamer and 6 KaiB.

It catalyses the reaction ATP + protein L-histidine = ADP + protein N-phospho-L-histidine.. Functionally, member of the two-component regulatory system SasA/RpaA involved in genome-wide circadian gene expression. One of several clock output pathways. Participates in the Kai clock protein complex, the main circadian regulator in cyanobacteria, via its interaction with KaiC. KaiC enhances the autophosphorylation activity of SasA, which then transfers its phosphate group to RpaA to activate it. In addition to its output function, recruits fold-shifted KaiB (KaiB(fs)) to KaiC to cooperatively form the KaiB(6):KaiC(6) complex (independent of SasA kinase activity). Required for robustness of the circadian rhythm of gene expression and is involved in clock output, also required for adaptation to light/dark cycles. The polypeptide is Adaptive-response sensory kinase SasA (Prochlorococcus marinus (strain MIT 9303)).